An 827-amino-acid chain; its full sequence is Leucine--tRNA ligase (827 aa).

The short motif at 46–56 (PYPSGRIHMGH) is the 'HIGH' region element. The 'KMSKS' region motif lies at 585 to 589 (KMSKS). Lysine 588 provides a ligand contact to ATP.

The protein belongs to the class-I aminoacyl-tRNA synthetase family.

The protein localises to the cytoplasm. It catalyses the reaction tRNA(Leu) + L-leucine + ATP = L-leucyl-tRNA(Leu) + AMP + diphosphate. This chain is Leucine--tRNA ligase, found in Desulfotalea psychrophila (strain LSv54 / DSM 12343).